Here is an 803-residue protein sequence, read N- to C-terminus: Leucine--tRNA ligase (803 aa).

A 'HIGH' region motif is present at residues 40 to 51 (PYPSGAGLHVGH). The 'KMSKS' region motif lies at 575–579 (KMSKS). Lysine 578 provides a ligand contact to ATP.

Belongs to the class-I aminoacyl-tRNA synthetase family.

The protein resides in the cytoplasm. The enzyme catalyses tRNA(Leu) + L-leucine + ATP = L-leucyl-tRNA(Leu) + AMP + diphosphate. This is Leucine--tRNA ligase from Listeria monocytogenes serovar 1/2a (strain ATCC BAA-679 / EGD-e).